Here is a 218-residue protein sequence, read N- to C-terminus: Peptide methionine sulfoxide reductase MsrA (218 aa).

C57 is an active-site residue.

The protein belongs to the MsrA Met sulfoxide reductase family.

The catalysed reaction is L-methionyl-[protein] + [thioredoxin]-disulfide + H2O = L-methionyl-(S)-S-oxide-[protein] + [thioredoxin]-dithiol. It catalyses the reaction [thioredoxin]-disulfide + L-methionine + H2O = L-methionine (S)-S-oxide + [thioredoxin]-dithiol. Has an important function as a repair enzyme for proteins that have been inactivated by oxidation. Catalyzes the reversible oxidation-reduction of methionine sulfoxide in proteins to methionine. This is Peptide methionine sulfoxide reductase MsrA from Brucella anthropi (Ochrobactrum anthropi).